The primary structure comprises 111 residues: Protein YibV (111 aa).

In Escherichia coli O157:H7, this protein is Protein YibV (yibV).